The primary structure comprises 128 residues: Centrosomal protein 15 (128 aa).

The protein localises to the cell projection. It localises to the cilium. In terms of biological role, may play a role in ciliary assembly. This is Centrosomal protein 15 (CEP15) from Bos taurus (Bovine).